The primary structure comprises 296 residues: ATP synthase gamma chain (296 aa).

The protein belongs to the ATPase gamma chain family. F-type ATPases have 2 components, CF(1) - the catalytic core - and CF(0) - the membrane proton channel. CF(1) has five subunits: alpha(3), beta(3), gamma(1), delta(1), epsilon(1). CF(0) has three main subunits: a, b and c.

The protein resides in the cell membrane. Produces ATP from ADP in the presence of a proton gradient across the membrane. The gamma chain is believed to be important in regulating ATPase activity and the flow of protons through the CF(0) complex. The polypeptide is ATP synthase gamma chain (Pseudarthrobacter chlorophenolicus (strain ATCC 700700 / DSM 12829 / CIP 107037 / JCM 12360 / KCTC 9906 / NCIMB 13794 / A6) (Arthrobacter chlorophenolicus)).